Reading from the N-terminus, the 745-residue chain is Elongation factor G, mitochondrial (745 aa).

The region spanning 40-317 (ERIRNIGISA…AVLDYLPNPG (278 aa)) is the tr-type G domain. GTP-binding positions include 49–56 (AHIDSGKT), 116–120 (DTPGH), and 170–173 (NKLD).

Belongs to the TRAFAC class translation factor GTPase superfamily. Classic translation factor GTPase family. EF-G/EF-2 subfamily.

The protein resides in the mitochondrion. It functions in the pathway protein biosynthesis; polypeptide chain elongation. Its function is as follows. Mitochondrial GTPase that catalyzes the GTP-dependent ribosomal translocation step during translation elongation. During this step, the ribosome changes from the pre-translocational (PRE) to the post-translocational (POST) state as the newly formed A-site-bound peptidyl-tRNA and P-site-bound deacylated tRNA move to the P and E sites, respectively. Catalyzes the coordinated movement of the two tRNA molecules, the mRNA and conformational changes in the ribosome. Essential during development as it acts as a retrograde signal from mitochondria to the nucleus to slow down cell proliferation if mitochondrial energy output is low. The sequence is that of Elongation factor G, mitochondrial from Drosophila melanogaster (Fruit fly).